Reading from the N-terminus, the 309-residue chain is Taste receptor type 2 member 105 (309 aa).

Residues 1-9 (MLSAAEGIL) lie on the Extracellular side of the membrane. A helical transmembrane segment spans residues 10–32 (LSIATVEAGLGVLGNTFIALVNC). Topologically, residues 33-44 (MDWAKNKKLSKI) are cytoplasmic. The helical transmembrane segment at 45–67 (GFLLFGLATSRIFIVWILILDAY) threads the bilayer. Topologically, residues 68-86 (AKLFFPGKYLSKSLTEIIS) are extracellular. A helical transmembrane segment spans residues 87–109 (CIWMTVNHMTVWFATSLSIFYFL). Topologically, residues 110–129 (KIANFSHYIFLWLKRRTDKV) are cytoplasmic. A helical transmembrane segment spans residues 130-149 (FAFLLWCLLISWAISFSFTV). Over 150-177 (KVMKSNPKNHGNRTSGTHWEKREFTSNY) the chain is Extracellular. A glycan (N-linked (GlcNAc...) asparagine) is linked at Asn-161. The helical transmembrane segment at 178-200 (VLINIGVISLLIMTLTACFLLII) threads the bilayer. Topologically, residues 201–226 (SLWKHSRQMQSNVSGFRDLNTEAHVK) are cytoplasmic. A helical transmembrane segment spans residues 227-249 (AIKFLISFIILFILYFIGVAVEI). The Extracellular segment spans residues 250–258 (ICMFIPENK). Residues 259-281 (LLFIFGLTTASVYPCCHSVILIL) form a helical membrane-spanning segment. Residues 282–309 (TNSQLKQAFVKVLEGLKFSENGKDLRAT) are Cytoplasmic-facing.

Belongs to the G-protein coupled receptor T2R family. As to expression, expressed in subsets of taste receptor cells of the tongue and palate epithelium and exclusively in gustducin-positive cells. Expressed in 15% taste bud cells in circumvallate and foliate papillae but only in 2% in fungiform papillae. Expressed in the duodenum, antrum and fundus (part of the stomach).

Its subcellular location is the membrane. In terms of biological role, gustducin-coupled cycloheximide receptor implicated in the perception of bitter compounds in the oral cavity and the gastrointestinal tract. Signals through PLCB2 and the calcium-regulated cation channel TRPM5. The sequence is that of Taste receptor type 2 member 105 (Tas2r105) from Rattus norvegicus (Rat).